The following is a 1089-amino-acid chain: PALM2-AKAP2 fusion protein (1089 aa).

Positions S70–I107 form a coiled coil. 3 disordered regions span residues S165–H194, P210–N231, and P289–G362. A compositionally biased stretch (basic and acidic residues) spans S173–L183. 2 positions are modified to phosphoserine: R315 and S318. The span at P317–N328 shows a compositional bias: basic and acidic residues. The span at G329–A347 shows a compositional bias: polar residues. At S348 the chain carries Phosphoserine. A compositionally biased stretch (low complexity) spans S348–C357. K370 is covalently cross-linked (Glycyl lysine isopeptide (Lys-Gly) (interchain with G-Cter in SUMO1); alternate). K370 participates in a covalent cross-link: Glycyl lysine isopeptide (Lys-Gly) (interchain with G-Cter in SUMO2); alternate. Residues K429–P517 form a disordered region. A compositionally biased stretch (basic and acidic residues) spans L455–Q470. Positions Q471 to L508 are enriched in low complexity. S553 carries the post-translational modification Phosphoserine. Positions T592–L644 are disordered. 3 positions are modified to phosphoserine: S678, S682, and S734. Polar residues predominate over residues F712–P749. Disordered regions lie at residues F712–E783, E800–K899, and T915–T934. T743 carries the phosphothreonine modification. Positions L782–Q795 are PKA-RII subunit binding domain. Over residues Q801–S814 the composition is skewed to basic and acidic residues. S847 carries the phosphoserine modification. Over residues Q850 to G871 the composition is skewed to basic and acidic residues. A coiled-coil region spans residues R928–V958. Phosphoserine occurs at positions 936, 964, 995, and 1002. Positions Q946 to L1021 are disordered.

Highly expressed in lung and weakly in thymus and cerebellum. Little or no expression in liver, heart and cerebral cortex. All isoforms are expressed in lung, but KL2A and KL2B isoforms are the principal isoforms in cerebellum.

Its subcellular location is the apical cell membrane. Its function is as follows. Binds to regulatory subunit (RII) of protein kinase A. May be involved in establishing polarity in signaling systems or in integrating PKA-RII isoforms with downstream effectors to capture, amplify and focus diffuse, trans-cellular signals carried by cAMP. Binds tp and modulates the structure of the actin cytoskeleton. In Mus musculus (Mouse), this protein is PALM2-AKAP2 fusion protein.